A 338-amino-acid chain; its full sequence is MTTGPATPPQTNHAEDRTEWPIQVLRAAPETYLLQEILKLAEVAIDTDGHPPFSDQTLIQLRSANAPLLILLSYVPAAPEVPAALAGVAVVLEHDGQPASGTLELVVHPTYRNQGVGQVLLKSLQSARGFESLNAWSHGSHAAAQQLADQFGFEAVRALRRLRLALDAGHQLPAASLPTNISLRSFVPDQDEAAWLAVNAAAFAHHPEQGETSLADLKSLMEEQWFDAAGFLLAVDETDQIMGFHWTKIHAAPAGHQAIGEVYVVGIAPAAQGKGLGKALTLAGIDYLQKKGLSSIMLYVDADNTAAVSLYQSLGFARWDADTMYSYPSATNSNNKFQ.

N-acetyltransferase domains are found at residues 29–173 and 181–338; these read PETY…HQLP and ISLR…NKFQ. A 1D-myo-inositol 2-(L-cysteinylamino)-2-deoxy-alpha-D-glucopyranoside-binding site is contributed by D55. 105-107 is an acetyl-CoA binding site; sequence LVV. Residues E208, K248, and E261 each coordinate 1D-myo-inositol 2-(L-cysteinylamino)-2-deoxy-alpha-D-glucopyranoside. Acetyl-CoA contacts are provided by residues 265-267 and 272-278; these read VGI and QGKGLGK. A 1D-myo-inositol 2-(L-cysteinylamino)-2-deoxy-alpha-D-glucopyranoside-binding site is contributed by Y299.

This sequence belongs to the acetyltransferase family. MshD subfamily. As to quaternary structure, monomer.

The enzyme catalyses 1D-myo-inositol 2-(L-cysteinylamino)-2-deoxy-alpha-D-glucopyranoside + acetyl-CoA = mycothiol + CoA + H(+). Catalyzes the transfer of acetyl from acetyl-CoA to desacetylmycothiol (Cys-GlcN-Ins) to form mycothiol. The sequence is that of Mycothiol acetyltransferase from Renibacterium salmoninarum (strain ATCC 33209 / DSM 20767 / JCM 11484 / NBRC 15589 / NCIMB 2235).